The primary structure comprises 330 residues: Protein LEG1 homolog (330 aa).

Residues 1–20 form the signal peptide; it reads MAFLPSWVCVLVGSFSASLA. N-linked (GlcNAc...) asparagine glycosylation is found at asparagine 24 and asparagine 69.

It belongs to the LEG1 family. In terms of tissue distribution, detected in saliva and in hypomineralized dental enamel (at protein level).

The protein localises to the secreted. May be involved in early liver development. This Homo sapiens (Human) protein is Protein LEG1 homolog.